Reading from the N-terminus, the 1174-residue chain is Lysylphosphatidylglycerol biosynthesis bifunctional protein LysX (1174 aa).

Residues 1 to 665 (MGVGLHLTVP…LLHHDGSAPD (665 aa)) are phosphatidylglycerol lysyltransferase. Residues 9-36 (VPGLRRDGRGVQSNSHDTSSKTTADISR) form a disordered region. Residues 19-33 (VQSNSHDTSSKTTAD) show a composition bias toward polar residues. 7 helical membrane passes run 82–102 (VPAA…LASV), 124–144 (FPDT…ALTA), 148–168 (IAWL…AAEI), 179–199 (FGEN…VLGY), 216–236 (AVWL…VELF), 274–294 (AIFG…LFLS), and 614–634 (VIPR…LPFS). The interval 666–1174 (VSGLRQVGLT…TLPFPLAKPH (509 aa)) is lysine--tRNA ligase. Positions 728 to 806 (VSVSGRIMRI…SLIVSGWRLI (79 aa)) form a DNA-binding region, OB. Residues aspartate 1086 and glutamate 1093 each contribute to the Mg(2+) site.

It in the N-terminal section; belongs to the LPG synthetase family. This sequence in the C-terminal section; belongs to the class-II aminoacyl-tRNA synthetase family. Mg(2+) is required as a cofactor.

The protein localises to the cell membrane. The catalysed reaction is tRNA(Lys) + L-lysine + ATP = L-lysyl-tRNA(Lys) + AMP + diphosphate. The enzyme catalyses L-lysyl-tRNA(Lys) + a 1,2-diacyl-sn-glycero-3-phospho-(1'-sn-glycerol) = a 1,2-diacyl-sn-glycero-3-phospho-1'-(3'-O-L-lysyl)-sn-glycerol + tRNA(Lys). Catalyzes the production of L-lysyl-tRNA(Lys)transfer and the transfer of a lysyl group from L-lysyl-tRNA(Lys) to membrane-bound phosphatidylglycerol (PG), which produces lysylphosphatidylglycerol (LPG), one of the components of the bacterial membrane with a positive net charge. LPG synthesis contributes to the resistance to cationic antimicrobial peptides (CAMPs) and likely protects M.tuberculosis against the CAMPs produced by competiting microorganisms (bacteriocins). In fact, the modification of anionic phosphatidylglycerol with positively charged L-lysine results in repulsion of the peptides. In Mycobacterium tuberculosis (strain KZN 1435 / MDR), this protein is Lysylphosphatidylglycerol biosynthesis bifunctional protein LysX (lysX).